The sequence spans 184 residues: ATP synthase subunit b, chloroplastic (184 aa).

The chain crosses the membrane as a helical span at residues 27 to 49 (LATNPINLSVVLGVLIFFGKGVL).

This sequence belongs to the ATPase B chain family. As to quaternary structure, F-type ATPases have 2 components, F(1) - the catalytic core - and F(0) - the membrane proton channel. F(1) has five subunits: alpha(3), beta(3), gamma(1), delta(1), epsilon(1). F(0) has four main subunits: a(1), b(1), b'(1) and c(10-14). The alpha and beta chains form an alternating ring which encloses part of the gamma chain. F(1) is attached to F(0) by a central stalk formed by the gamma and epsilon chains, while a peripheral stalk is formed by the delta, b and b' chains.

It localises to the plastid. It is found in the chloroplast thylakoid membrane. F(1)F(0) ATP synthase produces ATP from ADP in the presence of a proton or sodium gradient. F-type ATPases consist of two structural domains, F(1) containing the extramembraneous catalytic core and F(0) containing the membrane proton channel, linked together by a central stalk and a peripheral stalk. During catalysis, ATP synthesis in the catalytic domain of F(1) is coupled via a rotary mechanism of the central stalk subunits to proton translocation. Its function is as follows. Component of the F(0) channel, it forms part of the peripheral stalk, linking F(1) to F(0). This is ATP synthase subunit b, chloroplastic from Eucalyptus globulus subsp. globulus (Tasmanian blue gum).